Here is a 458-residue protein sequence, read N- to C-terminus: Vacuolar basic amino acid transporter 3 (458 aa).

The Cytoplasmic portion of the chain corresponds to 1-9 (MNMLIVGRV). Residues 10 to 30 (VASVGGSGLQTLCFVIGCTMV) form a helical membrane-spanning segment. The Vacuolar portion of the chain corresponds to 31-36 (GERSRP). A helical transmembrane segment spans residues 37–57 (LVISILSCAFAVAAIVGPIIG). Residues 58 to 67 (GAFTTHVTWR) are Cytoplasmic-facing. The helical transmembrane segment at 68 to 88 (WCFYINLPIGGLAIIMFLLTY) threads the bilayer. Residues 89 to 132 (KAENKGILQQIKDAIGTISSFTFSKFRHQVNFKRLMNGIIFKFD) lie on the Vacuolar side of the membrane. The chain crosses the membrane as a helical span at residues 133-153 (FFGFALCSAGLVLFLLGLTFG). Over 154–163 (GNKYSWNSGQ) the chain is Cytoplasmic. A helical membrane pass occupies residues 164–184 (VIAYLVLGVLLFIFSLVYDFF). The Vacuolar portion of the chain corresponds to 185 to 205 (LFDKFNPEPDNISYRPLLLRR). An N-linked (GlcNAc...) asparagine glycan is attached at Asn195. A helical transmembrane segment spans residues 206 to 226 (LVAKPAIIIINMVTFLLCTGY). Residues 227 to 248 (NGQMIYSVQFFQLIFASSAWKA) are Cytoplasmic-facing. A helical transmembrane segment spans residues 249–269 (GLHLIPIVITNVIAAIASGVI). The Vacuolar segment spans residues 270–277 (TKKLGLVK). Residues 278 to 298 (PLLIFGGVLGVIGAGLMTLMT) form a helical membrane-spanning segment. Topologically, residues 299 to 306 (NTSTKSTQ) are cytoplasmic. Residues 307–327 (IGVLLLPGFSLGFALQASLMS) form a helical membrane-spanning segment. Over 328-415 (AQLQITKDRP…STIGNILSDS (88 aa)) the chain is Vacuolar. Residues 416–436 (IKNVFWMDLGFYALGFLFCSF) traverse the membrane as a helical segment. The Cytoplasmic segment spans residues 437–458 (SSNKKLIIPKKDETPEDNLEDK).

It belongs to the major facilitator superfamily.

The protein resides in the vacuole membrane. Transporter required for vacuolar uptake of histidine and lysine. The polypeptide is Vacuolar basic amino acid transporter 3 (VBA3) (Saccharomyces cerevisiae (strain ATCC 204508 / S288c) (Baker's yeast)).